We begin with the raw amino-acid sequence, 305 residues long: Olfactory receptor 9G9 (305 aa).

The Extracellular portion of the chain corresponds to 1–27 (MQRSNHTVTEFILLGFTTDPGMQLGLF). Asn5 carries N-linked (GlcNAc...) asparagine glycosylation. The helical transmembrane segment at 28–48 (VVFLGVYSLTVVGNSTLIVLI) threads the bilayer. Residues 49 to 64 (CNDSHLHTPMYFVVGN) are Cytoplasmic-facing. The helical transmembrane segment at 65 to 85 (LSFLDLWYSSVYTPKILVICI) threads the bilayer. The Extracellular portion of the chain corresponds to 86–96 (SEDKSISFAGC). An intrachain disulfide couples Cys96 to Cys178. The chain crosses the membrane as a helical span at residues 97–117 (LCQFFFSAGLAYSECCLLAAM). The Cytoplasmic portion of the chain corresponds to 118-138 (AYDRYVAISKPLLYAQAMSIK). A helical transmembrane segment spans residues 139–159 (LCALLVAVSYCGGFINSSIIT). The Extracellular portion of the chain corresponds to 160–200 (KKTFSFNFCCENIIDDFFCDLLPLVKLACGEKGCYKFLMYF). A helical transmembrane segment spans residues 201–221 (LLASNVICPAVLILASYLFII). Over 222-239 (TSVLRISSSQGRLKAFST) the chain is Cytoplasmic. Residues 240–260 (CSSHLTSVTLYYGSILYIYAL) form a helical membrane-spanning segment. At 261 to 271 (PRSSYSFDMDK) the chain is on the extracellular side. The chain crosses the membrane as a helical span at residues 272–291 (IVSTFYTEVLPMLNPMIYSL). Over 292–305 (RNKDVKEALKKLLP) the chain is Cytoplasmic.

The protein belongs to the G-protein coupled receptor 1 family.

The protein resides in the cell membrane. Its function is as follows. Odorant receptor. The polypeptide is Olfactory receptor 9G9 (OR9G9) (Homo sapiens (Human)).